Here is a 469-residue protein sequence, read N- to C-terminus: 3-isopropylmalate dehydratase large subunit (469 aa).

3 residues coordinate [4Fe-4S] cluster: Cys-350, Cys-410, and Cys-413.

The protein belongs to the aconitase/IPM isomerase family. LeuC type 1 subfamily. In terms of assembly, heterodimer of LeuC and LeuD. Requires [4Fe-4S] cluster as cofactor.

It catalyses the reaction (2R,3S)-3-isopropylmalate = (2S)-2-isopropylmalate. The protein operates within amino-acid biosynthesis; L-leucine biosynthesis; L-leucine from 3-methyl-2-oxobutanoate: step 2/4. Its function is as follows. Catalyzes the isomerization between 2-isopropylmalate and 3-isopropylmalate, via the formation of 2-isopropylmaleate. The protein is 3-isopropylmalate dehydratase large subunit of Rhizobium etli (strain ATCC 51251 / DSM 11541 / JCM 21823 / NBRC 15573 / CFN 42).